The chain runs to 270 residues: Glutamate racemase (270 aa).

Substrate contacts are provided by residues 15 to 16 (DS) and 47 to 48 (YG). Residue cysteine 78 is the Proton donor/acceptor of the active site. Position 79 to 80 (79 to 80 (NT)) interacts with substrate. Catalysis depends on cysteine 189, which acts as the Proton donor/acceptor. 190-191 (TH) is a binding site for substrate.

Belongs to the aspartate/glutamate racemases family.

The enzyme catalyses L-glutamate = D-glutamate. The protein operates within cell wall biogenesis; peptidoglycan biosynthesis. In terms of biological role, provides the (R)-glutamate required for cell wall biosynthesis. This Syntrophus aciditrophicus (strain SB) protein is Glutamate racemase.